The following is a 206-amino-acid chain: Thymidylate kinase (206 aa).

Residue 11–18 (GIDGAGKT) participates in ATP binding.

This sequence belongs to the thymidylate kinase family.

It catalyses the reaction dTMP + ATP = dTDP + ADP. Its function is as follows. Phosphorylation of dTMP to form dTDP in both de novo and salvage pathways of dTTP synthesis. The protein is Thymidylate kinase of Burkholderia cenocepacia (strain HI2424).